The chain runs to 439 residues: Enolase (439 aa).

Positions 160 and 169 each coordinate substrate. The Proton donor role is filled by glutamate 212. Mg(2+) is bound by residues aspartate 247, glutamate 296, and aspartate 323. Glutamate 296 and aspartate 323 together coordinate substrate. Lysine 348 functions as the Proton acceptor in the catalytic mechanism. Residues 375 to 378 (SHRS) and lysine 399 contribute to the substrate site.

The protein belongs to the enolase family. As to quaternary structure, homodimer. Mg(2+) is required as a cofactor.

Its subcellular location is the cytoplasm. The enzyme catalyses (2R)-2-phosphoglycerate = phosphoenolpyruvate + H2O. It functions in the pathway carbohydrate degradation; glycolysis; pyruvate from D-glyceraldehyde 3-phosphate: step 4/5. This chain is Enolase (ENO), found in Rhodotorula mucilaginosa (Yeast).